The chain runs to 219 residues: 16S rRNA (adenine(1408)-N(1))-methyltransferase (219 aa).

S-adenosyl-L-methionine-binding positions include G32, N38, D55, 87 to 88 (AE), 104 to 109 (LFPWGT), and 195 to 197 (SLW).

Belongs to the methyltransferase superfamily. Kanamycin-apramycin resistance family.

The enzyme catalyses adenosine(1408) in 16S rRNA + S-adenosyl-L-methionine = N(1)-methyladenosine(1408) in 16S rRNA + S-adenosyl-L-homocysteine + H(+). In terms of biological role, specifically methylates the N(1) position of adenine 1408 in 16S rRNA. Confers resistance to various aminoglycosides, including kanamycin, neomycin, apramycin, ribostamycin and gentamicin. Methylates only fully assembled 30S subunits. This is 16S rRNA (adenine(1408)-N(1))-methyltransferase (npmA) from Escherichia coli.